The following is a 315-amino-acid chain: Olfactory receptor 4K3 (315 aa).

The Extracellular segment spans residues 1 to 25; it reads MAWSNQSAVTEFILRGLSSSLELQI. N-linked (GlcNAc...) asparagine glycosylation occurs at asparagine 5. A helical transmembrane segment spans residues 26 to 49; it reads FYFLFFSIVYAATVLGNLLIVVTI. Residues 50–57 lie on the Cytoplasmic side of the membrane; it reads ASEPHLHS. A helical transmembrane segment spans residues 58–79; the sequence is PMYFLLGNLSFIDMSLASFATP. Over 80–100 the chain is Extracellular; it reads KMIADFLREHKAISFEGCMTQ. Cysteine 97 and cysteine 189 are oxidised to a cystine. Residues 101–120 form a helical membrane-spanning segment; sequence MFFLHLLGGAEIVLLISMSF. The Cytoplasmic segment spans residues 121-139; it reads DRYVAICKPLHYLTIMSRR. Residues 140–158 form a helical membrane-spanning segment; sequence MCVGLVILSWIVGIFHALS. Topologically, residues 159 to 195 are extracellular; the sequence is QLAFTVNLPFCGPNEVDSFFCDLPLVIKLACVDTYIL. The helical transmembrane segment at 196 to 219 threads the bilayer; that stretch reads GVFMISTSGMIALVCFILLVISYT. The Cytoplasmic segment spans residues 220–235; the sequence is IILVTVRQRSSGGSSK. A helical transmembrane segment spans residues 236–258; the sequence is ALSTCSAHFTVVTLFFGPCTFIY. Residues 259-269 lie on the Extracellular side of the membrane; sequence VWPFTNFPIDK. The helical transmembrane segment at 270 to 289 threads the bilayer; sequence VLSVFYTIYTPLLNPVIYTV. Residues 290–315 lie on the Cytoplasmic side of the membrane; it reads RNKDVKYSMRKLSSHIFKSRKTDHTP.

It belongs to the G-protein coupled receptor 1 family.

It is found in the cell membrane. Functionally, odorant receptor. This is Olfactory receptor 4K3 (OR4K3) from Homo sapiens (Human).